An 89-amino-acid chain; its full sequence is Small ribosomal subunit protein uS15 (89 aa).

Belongs to the universal ribosomal protein uS15 family. Part of the 30S ribosomal subunit. Forms a bridge to the 50S subunit in the 70S ribosome, contacting the 23S rRNA.

One of the primary rRNA binding proteins, it binds directly to 16S rRNA where it helps nucleate assembly of the platform of the 30S subunit by binding and bridging several RNA helices of the 16S rRNA. Its function is as follows. Forms an intersubunit bridge (bridge B4) with the 23S rRNA of the 50S subunit in the ribosome. The chain is Small ribosomal subunit protein uS15 from Oleidesulfovibrio alaskensis (strain ATCC BAA-1058 / DSM 17464 / G20) (Desulfovibrio alaskensis).